We begin with the raw amino-acid sequence, 141 residues long: Putative nickel-responsive regulator (141 aa).

Positions 80, 91, 93, and 99 each coordinate Ni(2+).

The protein belongs to the transcriptional regulatory CopG/NikR family. As to quaternary structure, homotetramer. Ni(2+) is required as a cofactor.

Functionally, transcriptional regulator. This chain is Putative nickel-responsive regulator, found in Methanocaldococcus jannaschii (strain ATCC 43067 / DSM 2661 / JAL-1 / JCM 10045 / NBRC 100440) (Methanococcus jannaschii).